The primary structure comprises 362 residues: Glutaminyl-peptide cyclotransferase (362 aa).

Positions 1–35 (MAGSEDKRVVGTLHLLLLQATVLSLTAGNLSLVSA) are cleaved as a signal peptide. N-linked (GlcNAc...) asparagine glycosylation is found at Asn-29 and Asn-50. Cys-140 and Cys-165 are oxidised to a cystine. Asp-160 lines the Zn(2+) pocket. Catalysis depends on Glu-202, which acts as the Proton acceptor. Zn(2+) is bound at residue Glu-203. Asp-249 (proton acceptor) is an active-site residue. Residue His-331 coordinates Zn(2+).

It belongs to the glutaminyl-peptide cyclotransferase family.

The protein localises to the secreted. The catalysed reaction is N-terminal L-glutaminyl-[peptide] = N-terminal 5-oxo-L-prolyl-[peptide] + NH4(+). Its function is as follows. Responsible for the biosynthesis of pyroglutamyl peptides. Has a bias against acidic and tryptophan residues adjacent to the N-terminal glutaminyl residue and a lack of importance of chain length after the second residue. In Mus musculus (Mouse), this protein is Glutaminyl-peptide cyclotransferase (Qpct).